A 530-amino-acid chain; its full sequence is Negative elongation factor A (530 aa).

Residues 89–248 (WVLMVADILK…TPIPPSRTPL (160 aa)) enclose the HDAg domain. Positions 125–188 (REKVSECEAS…LQKSTETAQQ (64 aa)) are NELF-C/D-binding. The residue at position 157 (Thr-157) is a Phosphothreonine. Residues 189 to 248 (LKRSAGVPFHAKGRGLLRKMDTTTPLKGIPKQAPFRSPTTPSVFSPSGNRTPIPPSRTPL) form an RNAPII-binding region. Disordered regions lie at residues 213 to 248 (PLKGIPKQAPFRSPTTPSVFSPSGNRTPIPPSRTPL), 266 to 296 (GAGREAKRRRKTLDTEVVEKPTKEETVVENA), and 312 to 409 (SLNS…TAQT). Ser-225 and Ser-233 each carry phosphoserine. The span at 225–238 (SPTTPSVFSPSGNR) shows a compositional bias: polar residues. The residue at position 277 (Thr-277) is a Phosphothreonine. Positions 277–291 (TLDTEVVEKPTKEET) are enriched in basic and acidic residues. Positions 315-341 (SEPTLPSTSYLPSTPSVVPASSYIPSS) are enriched in low complexity. Ser-363 carries the post-translational modification Phosphoserine.

Belongs to the NELF-A family. The NELF complex is composed of NELFA, NELFB, NELFCD and NELFE; NELFA and NELFCD form a stable subcomplex that binds to the N-terminus of NELFB. In vitro, the NELFA:NELFCD subcomplex binds to ssDNA and ssRNA in a sequence- and structure-dependent manner. Interacts with the RNA polymerase II complex when it is not phosphorylated by P-TEFb. Interacts with NELFB. In terms of tissue distribution, ubiquitous. Expressed in brain, heart, spleen, lung, liver, muscle, kidney and testis. Already expressed in 7 dpc embryos.

Its subcellular location is the nucleus. Its function is as follows. Essential component of the NELF complex, a complex that negatively regulates the elongation of transcription by RNA polymerase II. The NELF complex, which acts via an association with the DSIF complex and causes transcriptional pausing, is counteracted by the P-TEFb kinase complex. This is Negative elongation factor A (Nelfa) from Mus musculus (Mouse).